The following is a 215-amino-acid chain: Cytochrome b6 (215 aa).

A helical transmembrane segment spans residues 32 to 52 (IFYCLGGITLTCFLVQVATGF). C35 is a heme c binding site. Heme b is bound by residues H86 and H100. The next 3 helical transmembrane spans lie at 90–110 (ASMM…TGGF), 116–136 (LTWV…VTGY), and 186–206 (LHTF…FLMI). Positions 187 and 202 each coordinate heme b.

The protein belongs to the cytochrome b family. PetB subfamily. The 4 large subunits of the cytochrome b6-f complex are cytochrome b6, subunit IV (17 kDa polypeptide, PetD), cytochrome f and the Rieske protein, while the 4 small subunits are PetG, PetL, PetM and PetN. The complex functions as a dimer. Heme b is required as a cofactor. The cofactor is heme c.

It localises to the plastid. Its subcellular location is the chloroplast thylakoid membrane. Functionally, component of the cytochrome b6-f complex, which mediates electron transfer between photosystem II (PSII) and photosystem I (PSI), cyclic electron flow around PSI, and state transitions. The polypeptide is Cytochrome b6 (Pinus koraiensis (Korean pine)).